Reading from the N-terminus, the 132-residue chain is UPF0102 protein Achl_2213 (132 aa).

This sequence belongs to the UPF0102 family.

This is UPF0102 protein Achl_2213 from Pseudarthrobacter chlorophenolicus (strain ATCC 700700 / DSM 12829 / CIP 107037 / JCM 12360 / KCTC 9906 / NCIMB 13794 / A6) (Arthrobacter chlorophenolicus).